The following is an 864-amino-acid chain: MHERYVPADVEAAAQGDWRAADAYKTQEDSQKPKFYCVSMLPYPSGKLHMGHVRNYTINDVMYRYLRMNGYNTLMPMGWDAFGMPAENAAMANGVPPAKWTYDNIDYMKGQMQSMGLAIDWSREIATCKPDYYKWNQWLFLKMLEKGIAYKKTGTVNWDPVDQTVLANEQVIDGRGWRSGALVEKREIPMYYLRITQYADELLNDLDGLGWPERVKIMQQNWIGKSFGVNFGFPYELDGEKKLLRVFTTRADTIMGVTFCAIAAEHPLATRLAQDKPELLTFIDECKRGGVAEADVATMEKKGVATGFSVAHPLTGEPVEVWIGNYVLMSYGEGAVMGVPGHDERDFAFAKKYDLPIKQVISAEGQQYSLDAWQEWYGDKETAVCVNSGKYDGLRYAEAVDAVAADLNAGGFGDKQVTWRLRDWGVSRQRYWGTPIPIIHCPSCGDVPVPEQDLPVVLPEDLVPDGSGNPLAKSEAFLNCACPKCGAAAKRETDTMDTFVDSSWYFSRYTAPDAETMVDARTDYWMPMDQYIGGIEHAILHLLYSRFWTKVMRDLGLVKFGEPAKNLLTQGMVLNETFYREDASGKKTWYNPLDVTVTHDDKGRPVGATLNTDGQPVVLGGIEKMSKSKNNGVDPQLLIDQYGADTARLFTMFAAPPEQQLEWSGAGVEGASRFLRRVWSFGAANREALAARAGFDAAALGEADKALRREIYSVLKQADFDYQRLQYNTVVSAAMKMLNAIDGAKGATPGVLRETYGVLLRVLYPVVPHVTFELWKALGYADEFGPLLDAPWPKVDEAALEQAEIELVLQVNGKVRGALKVAKDASREAIEAAAVADDAFAKFSDGKPAKKIVVVPGRLVNIVV.

The 'HIGH' region signature appears at 42–52 (PYPSGKLHMGH). Residues 624 to 628 (KMSKS) carry the 'KMSKS' region motif. Residue lysine 627 coordinates ATP.

The protein belongs to the class-I aminoacyl-tRNA synthetase family.

The protein localises to the cytoplasm. It catalyses the reaction tRNA(Leu) + L-leucine + ATP = L-leucyl-tRNA(Leu) + AMP + diphosphate. The chain is Leucine--tRNA ligase from Burkholderia lata (strain ATCC 17760 / DSM 23089 / LMG 22485 / NCIMB 9086 / R18194 / 383).